A 182-amino-acid chain; its full sequence is Ribosome maturation factor RimM (182 aa).

The PRC barrel domain maps to Gly103–Phe182.

It belongs to the RimM family. As to quaternary structure, binds ribosomal protein uS19.

It localises to the cytoplasm. An accessory protein needed during the final step in the assembly of 30S ribosomal subunit, possibly for assembly of the head region. Essential for efficient processing of 16S rRNA. May be needed both before and after RbfA during the maturation of 16S rRNA. It has affinity for free ribosomal 30S subunits but not for 70S ribosomes. The polypeptide is Ribosome maturation factor RimM (Serratia proteamaculans (strain 568)).